Here is a 147-residue protein sequence, read N- to C-terminus: Acidic phospholipase A2 beta-bungarotoxin A4 chain (147 aa).

Positions 1-19 (MNPAHLLVLSAVCVSLLGA) are cleaved as a signal peptide. A propeptide spanning residues 20–27 (ANIPPQHL) is cleaved from the precursor. 6 cysteine pairs are disulfide-bonded: C54/C146, C56/C72, C71/C127, C78/C120, C88/C113, and C106/C118. Ca(2+)-binding residues include Y55, G57, and G59. H75 is an active-site residue. Position 76 (D76) interacts with Ca(2+). The active site involves D121.

Belongs to the phospholipase A2 family. Group I subfamily. D49 sub-subfamily. As to quaternary structure, heterodimer; disulfide-linked. The A chains have phospholipase A2 activity and the B chains show homology with the basic protease inhibitors. Requires Ca(2+) as cofactor. In terms of tissue distribution, expressed by the venom gland.

The protein localises to the secreted. It carries out the reaction a 1,2-diacyl-sn-glycero-3-phosphocholine + H2O = a 1-acyl-sn-glycero-3-phosphocholine + a fatty acid + H(+). Snake venom phospholipase A2 (PLA2) that inhibits neuromuscular transmission by blocking acetylcholine release from the nerve termini. PLA2 catalyzes the calcium-dependent hydrolysis of the 2-acyl groups in 3-sn-phosphoglycerides. The chain is Acidic phospholipase A2 beta-bungarotoxin A4 chain from Bungarus multicinctus (Many-banded krait).